Here is a 375-residue protein sequence, read N- to C-terminus: tRNA-specific 2-thiouridylase MnmA (375 aa).

Residues 12–19 and Met-38 each bind ATP; that span reads GMSGGVDS. The interaction with target base in tRNA stretch occupies residues 98–100; sequence NPD. The active-site Nucleophile is Cys-103. A disulfide bond links Cys-103 and Cys-200. ATP is bound at residue Gly-127. The interval 150–152 is interaction with tRNA; it reads KDQ. Catalysis depends on Cys-200, which acts as the Cysteine persulfide intermediate. Residues 312–313 are interaction with tRNA; it reads RY.

The protein belongs to the MnmA/TRMU family.

The protein resides in the cytoplasm. The enzyme catalyses S-sulfanyl-L-cysteinyl-[protein] + uridine(34) in tRNA + AH2 + ATP = 2-thiouridine(34) in tRNA + L-cysteinyl-[protein] + A + AMP + diphosphate + H(+). Its function is as follows. Catalyzes the 2-thiolation of uridine at the wobble position (U34) of tRNA, leading to the formation of s(2)U34. This chain is tRNA-specific 2-thiouridylase MnmA, found in Lactobacillus delbrueckii subsp. bulgaricus (strain ATCC 11842 / DSM 20081 / BCRC 10696 / JCM 1002 / NBRC 13953 / NCIMB 11778 / NCTC 12712 / WDCM 00102 / Lb 14).